The sequence spans 164 residues: Cytochrome c-type biogenesis protein CcmE (164 aa).

The Cytoplasmic portion of the chain corresponds to 1–8 (MNPRRKSR). The chain crosses the membrane as a helical; Signal-anchor for type II membrane protein span at residues 9–29 (LYLAVVVLIGIGLTTTLVLYA). Residues 30–164 (LRSNIDLFYT…NSTAAQGNAS (135 aa)) are Periplasmic-facing. 2 residues coordinate heme: histidine 130 and tyrosine 134. Positions 131–150 (DEKYTPPEVKEAMKENHTRP) are enriched in basic and acidic residues. The segment at 131-164 (DEKYTPPEVKEAMKENHTRPAEAYNSTAAQGNAS) is disordered. Polar residues predominate over residues 154 to 164 (YNSTAAQGNAS).

Belongs to the CcmE/CycJ family.

Its subcellular location is the cell inner membrane. Functionally, heme chaperone required for the biogenesis of c-type cytochromes. Transiently binds heme delivered by CcmC and transfers the heme to apo-cytochromes in a process facilitated by CcmF and CcmH. The chain is Cytochrome c-type biogenesis protein CcmE from Yersinia enterocolitica serotype O:8 / biotype 1B (strain NCTC 13174 / 8081).